The primary structure comprises 418 residues: NADH-quinone oxidoreductase subunit D (418 aa).

This sequence belongs to the complex I 49 kDa subunit family. As to quaternary structure, NDH-1 is composed of 14 different subunits. Subunits NuoB, C, D, E, F, and G constitute the peripheral sector of the complex.

It is found in the cell inner membrane. It catalyses the reaction a quinone + NADH + 5 H(+)(in) = a quinol + NAD(+) + 4 H(+)(out). Functionally, NDH-1 shuttles electrons from NADH, via FMN and iron-sulfur (Fe-S) centers, to quinones in the respiratory chain. The immediate electron acceptor for the enzyme in this species is believed to be ubiquinone. Couples the redox reaction to proton translocation (for every two electrons transferred, four hydrogen ions are translocated across the cytoplasmic membrane), and thus conserves the redox energy in a proton gradient. The protein is NADH-quinone oxidoreductase subunit D of Neisseria meningitidis serogroup B (strain ATCC BAA-335 / MC58).